The chain runs to 198 residues: dITP/XTP pyrophosphatase (198 aa).

7-12 (THNPHK) contacts substrate. Mg(2+)-binding residues include glutamate 40 and aspartate 69. Aspartate 69 acts as the Proton acceptor in catalysis. Substrate is bound by residues threonine 70, 151–154 (FGYD), lysine 174, and 179–180 (HR).

Belongs to the HAM1 NTPase family. Homodimer. The cofactor is Mg(2+).

The enzyme catalyses XTP + H2O = XMP + diphosphate + H(+). The catalysed reaction is dITP + H2O = dIMP + diphosphate + H(+). It catalyses the reaction ITP + H2O = IMP + diphosphate + H(+). Functionally, pyrophosphatase that catalyzes the hydrolysis of nucleoside triphosphates to their monophosphate derivatives, with a high preference for the non-canonical purine nucleotides XTP (xanthosine triphosphate), dITP (deoxyinosine triphosphate) and ITP. Seems to function as a house-cleaning enzyme that removes non-canonical purine nucleotides from the nucleotide pool, thus preventing their incorporation into DNA/RNA and avoiding chromosomal lesions. The sequence is that of dITP/XTP pyrophosphatase from Thermoanaerobacter sp. (strain X514).